Reading from the N-terminus, the 185-residue chain is Ribosome-recycling factor (185 aa).

The protein belongs to the RRF family.

Its subcellular location is the cytoplasm. Its function is as follows. Responsible for the release of ribosomes from messenger RNA at the termination of protein biosynthesis. May increase the efficiency of translation by recycling ribosomes from one round of translation to another. This chain is Ribosome-recycling factor, found in Listeria innocua serovar 6a (strain ATCC BAA-680 / CLIP 11262).